The chain runs to 229 residues: Uridylate kinase (229 aa).

11–12 (GS) provides a ligand contact to ATP. UMP is bound at residue Gly-45. 2 residues coordinate ATP: Gly-46 and Arg-50. UMP contacts are provided by residues Asp-67 and 114 to 120 (TEPGHTT). Positions 140, 146, and 149 each coordinate ATP.

Belongs to the UMP kinase family. In terms of assembly, homohexamer.

It is found in the cytoplasm. The enzyme catalyses UMP + ATP = UDP + ADP. It functions in the pathway pyrimidine metabolism; CTP biosynthesis via de novo pathway; UDP from UMP (UMPK route): step 1/1. Inhibited by UTP. Its function is as follows. Catalyzes the reversible phosphorylation of UMP to UDP. This Thermoplasma acidophilum (strain ATCC 25905 / DSM 1728 / JCM 9062 / NBRC 15155 / AMRC-C165) protein is Uridylate kinase.